A 387-amino-acid chain; its full sequence is 3-ketoacyl-CoA thiolase (387 aa).

Cys-91 serves as the catalytic Acyl-thioester intermediate. Residues His-343 and Cys-373 each act as proton acceptor in the active site.

The protein belongs to the thiolase-like superfamily. Thiolase family. As to quaternary structure, heterotetramer of two alpha chains (FadB) and two beta chains (FadA).

The protein resides in the cytoplasm. The enzyme catalyses an acyl-CoA + acetyl-CoA = a 3-oxoacyl-CoA + CoA. Its pathway is lipid metabolism; fatty acid beta-oxidation. Catalyzes the final step of fatty acid oxidation in which acetyl-CoA is released and the CoA ester of a fatty acid two carbons shorter is formed. In Aeromonas salmonicida (strain A449), this protein is 3-ketoacyl-CoA thiolase.